We begin with the raw amino-acid sequence, 408 residues long: LL-diaminopimelate aminotransferase (408 aa).

Residues Tyr-15 and Gly-42 each coordinate substrate. Pyridoxal 5'-phosphate is bound by residues Tyr-72, Ser-108 to Lys-109, Tyr-132, Asn-187, Tyr-218, and Ser-246 to Ser-248. Substrate-binding residues include Lys-109, Tyr-132, and Asn-187. At Lys-249 the chain carries N6-(pyridoxal phosphate)lysine. Residues Arg-257 and Asn-292 each coordinate pyridoxal 5'-phosphate. Positions 292 and 388 each coordinate substrate.

This sequence belongs to the class-I pyridoxal-phosphate-dependent aminotransferase family. LL-diaminopimelate aminotransferase subfamily. Homodimer. It depends on pyridoxal 5'-phosphate as a cofactor.

It catalyses the reaction (2S,6S)-2,6-diaminopimelate + 2-oxoglutarate = (S)-2,3,4,5-tetrahydrodipicolinate + L-glutamate + H2O + H(+). Its pathway is amino-acid biosynthesis; L-lysine biosynthesis via DAP pathway; LL-2,6-diaminopimelate from (S)-tetrahydrodipicolinate (aminotransferase route): step 1/1. Functionally, involved in the synthesis of meso-diaminopimelate (m-DAP or DL-DAP), required for both lysine and peptidoglycan biosynthesis. Catalyzes the direct conversion of tetrahydrodipicolinate to LL-diaminopimelate. This is LL-diaminopimelate aminotransferase from Prochlorococcus marinus (strain AS9601).